Consider the following 291-residue polypeptide: Protease HtpX homolog (291 aa).

A run of 2 helical transmembrane segments spans residues 4 to 24 and 38 to 58; these read VVLFLFTNLAVMLVLSVSARV and MGMLLLFAALIGFGGSFISLL. Position 144 (His-144) interacts with Zn(2+). Residue Glu-145 is part of the active site. Position 148 (His-148) interacts with Zn(2+). 2 helical membrane-spanning segments follow: residues 159–179 and 199–219; these read LIQGVLNTFVIFLSRVIAYAI and ISSIIFEIMFGILASVVVMYF. Glu-224 contributes to the Zn(2+) binding site.

The protein belongs to the peptidase M48B family. Requires Zn(2+) as cofactor.

The protein localises to the cell inner membrane. This is Protease HtpX homolog from Chlorobium phaeobacteroides (strain DSM 266 / SMG 266 / 2430).